The following is a 124-amino-acid chain: Glutaredoxin-2 (124 aa).

Cysteines 13 and 16 form a disulfide.

Belongs to the glutaredoxin family. In terms of assembly, homodimer.

It localises to the host cytoplasm. Functionally, glutaredoxin necessary for virion morphogenesis and virus replication. Functions as a thiol-disulfide transfer protein between membrane-associated OPG128 and substrates OPG095 or OPG053. The complete pathway for formation of disulfide bonds in intracellular virion membrane proteins sequentially involves oxidation of OPG072, OPG128 and OPG088. Exhibit thioltransferase and dehydroascorbate reductase activities in vitro. This chain is Glutaredoxin-2 (OPG088), found in Oryctolagus cuniculus (Rabbit).